A 392-amino-acid polypeptide reads, in one-letter code: MTLRRLRKLQQKEEATAAPDPAGRAPDSEAARAAPLPSGPPAAAAPPGAPGEELYAALEDYHPAELYRALAVSGGTLPRRKGSGFRWKNFTQSPEQQRKVLTLEKGDNQTFGFEIQTYGLHHREEQRVEMVTFVCRVHESSPAQLAGLTPGDTIASVNGLNVEGIRHREIVDIIKASGNVLRLETLYGTSIRKAELEARLQYLKQTLYEKWGEYRSLMVQEQRLVHGLVVKDPSIYDTLESVRSCLYGAGLLPGSLPFGPLLAAPGSARGGARRAKGDTDDAVYHTCFFGGAEPQALPPPPPPARALGPSSAETPASVLFPAPRSTLSRSASVRCAGPGGGGGAPGALWTEAREQALCGAGLRKTKYRSFRRRLLKFIPGLNRSLEEEESQL.

The interval 1–50 (MTLRRLRKLQQKEEATAAPDPAGRAPDSEAARAAPLPSGPPAAAAPPGAP) is disordered. The segment covering 37-49 (PSGPPAAAAPPGA) has biased composition (pro residues). At Thr-76 the chain carries Phosphothreonine. A Phosphoserine modification is found at Ser-93. In terms of domain architecture, PDZ spans 100-189 (VLTLEKGDNQ…VLRLETLYGT (90 aa)). The tract at residues 180 to 257 (VLRLETLYGT…GAGLLPGSLP (78 aa)) is interaction with PSCD3. Residue Tyr-236 is modified to Phosphotyrosine. Arg-269 carries the post-translational modification Omega-N-methylarginine. The interval 294 to 315 (PQALPPPPPPARALGPSSAETP) is disordered. Phosphoserine is present on Ser-384.

As to quaternary structure, heteromer. Composed of TAMALIN, CYTH2 and at least one GRM1. Also interacts with GRM2, GRM3 and GRM5. Interacts with CYTH3. As to expression, highly expressed in brain, heart and lung, and to a lower extent in embryo, kidney and ovary.

It is found in the cytoplasm. It localises to the perinuclear region. Its subcellular location is the cell membrane. The protein localises to the postsynaptic cell membrane. Its function is as follows. Plays a role in intracellular trafficking and contributes to the macromolecular organization of group 1 metabotropic glutamate receptors (mGluRs) at synapses. The protein is General receptor for phosphoinositides 1-associated scaffold protein of Mus musculus (Mouse).